The chain runs to 99 residues: Large ribosomal subunit protein uL23 (99 aa).

It belongs to the universal ribosomal protein uL23 family. In terms of assembly, part of the 50S ribosomal subunit. Contacts protein L29, and trigger factor when it is bound to the ribosome.

Functionally, one of the early assembly proteins it binds 23S rRNA. One of the proteins that surrounds the polypeptide exit tunnel on the outside of the ribosome. Forms the main docking site for trigger factor binding to the ribosome. In Pseudomonas savastanoi pv. phaseolicola (strain 1448A / Race 6) (Pseudomonas syringae pv. phaseolicola (strain 1448A / Race 6)), this protein is Large ribosomal subunit protein uL23.